The following is a 124-amino-acid chain: Insulin growth factor-like family member 4 (124 aa).

The signal sequence occupies residues 1 to 19; sequence MVPRISAAIFIFELLGSNS. N-linked (GlcNAc...) asparagine glycosylation is found at Asn-57 and Asn-84.

This sequence belongs to the IGFL family. In terms of tissue distribution, detected in the cerebellum.

Its subcellular location is the secreted. This chain is Insulin growth factor-like family member 4 (IGFL4), found in Homo sapiens (Human).